The chain runs to 238 residues: Probable transcriptional regulatory protein llmg_0242 (238 aa).

Belongs to the TACO1 family. YeeN subfamily.

The protein resides in the cytoplasm. This chain is Probable transcriptional regulatory protein llmg_0242, found in Lactococcus lactis subsp. cremoris (strain MG1363).